We begin with the raw amino-acid sequence, 252 residues long: Imidazole glycerol phosphate synthase subunit HisF (252 aa).

Catalysis depends on residues Asp11 and Asp130.

Belongs to the HisA/HisF family. As to quaternary structure, heterodimer of HisH and HisF.

It localises to the cytoplasm. It catalyses the reaction 5-[(5-phospho-1-deoxy-D-ribulos-1-ylimino)methylamino]-1-(5-phospho-beta-D-ribosyl)imidazole-4-carboxamide + L-glutamine = D-erythro-1-(imidazol-4-yl)glycerol 3-phosphate + 5-amino-1-(5-phospho-beta-D-ribosyl)imidazole-4-carboxamide + L-glutamate + H(+). It functions in the pathway amino-acid biosynthesis; L-histidine biosynthesis; L-histidine from 5-phospho-alpha-D-ribose 1-diphosphate: step 5/9. Functionally, IGPS catalyzes the conversion of PRFAR and glutamine to IGP, AICAR and glutamate. The HisF subunit catalyzes the cyclization activity that produces IGP and AICAR from PRFAR using the ammonia provided by the HisH subunit. The sequence is that of Imidazole glycerol phosphate synthase subunit HisF from Moorella thermoacetica (strain ATCC 39073 / JCM 9320).